A 253-amino-acid polypeptide reads, in one-letter code: Ubiquinone biosynthesis O-methyltransferase (253 aa).

Positions 47, 78, 99, and 141 each coordinate S-adenosyl-L-methionine.

The protein belongs to the methyltransferase superfamily. UbiG/COQ3 family.

The catalysed reaction is a 3-demethylubiquinol + S-adenosyl-L-methionine = a ubiquinol + S-adenosyl-L-homocysteine + H(+). It catalyses the reaction a 3-(all-trans-polyprenyl)benzene-1,2-diol + S-adenosyl-L-methionine = a 2-methoxy-6-(all-trans-polyprenyl)phenol + S-adenosyl-L-homocysteine + H(+). Its pathway is cofactor biosynthesis; ubiquinone biosynthesis. Its function is as follows. O-methyltransferase that catalyzes the 2 O-methylation steps in the ubiquinone biosynthetic pathway. The sequence is that of Ubiquinone biosynthesis O-methyltransferase from Rhodopseudomonas palustris (strain HaA2).